Reading from the N-terminus, the 609-residue chain is Autophagy-related protein 22-1 (609 aa).

The next 4 membrane-spanning stretches (helical) occupy residues 95–115 (YYAG…GVEI), 117–137 (TASF…ILII), 151–171 (LLLV…LGVV), and 176–196 (MVGA…FVLL). Residues 214–238 (AREPPPALDGSRAQEGHSDTTNDID) form a disordered region. Residues 225-238 (RAQEGHSDTTNDID) show a composition bias toward basic and acidic residues. N-linked (GlcNAc...) asparagine glycosylation occurs at asparagine 244. Residues 287-307 (IGIGYIGAIILQIVCILVVIA) traverse the membrane as a helical segment. An N-linked (GlcNAc...) asparagine glycan is attached at asparagine 309. A run of 3 helical transmembrane segments spans residues 317–337 (LVLF…ALWL), 381–401 (ILLF…VSGT), and 415–435 (AALG…AFSW). N-linked (GlcNAc...) asparagine glycosylation is present at asparagine 443. The next 4 membrane-spanning stretches (helical) occupy residues 450-470 (IIAC…GFIP), 487-509 (FPLG…SFFG), 522-542 (ALYA…VGII), and 552-572 (AFVF…LVDV).

Belongs to the ATG22 family.

It localises to the vacuole membrane. Functionally, vacuolar effluxer which mediate the efflux of amino acids resulting from autophagic degradation. The release of autophagic amino acids allows the maintenance of protein synthesis and viability during nitrogen starvation. In Neosartorya fischeri (strain ATCC 1020 / DSM 3700 / CBS 544.65 / FGSC A1164 / JCM 1740 / NRRL 181 / WB 181) (Aspergillus fischerianus), this protein is Autophagy-related protein 22-1 (atg22-1).